Reading from the N-terminus, the 299-residue chain is Acetylglutamate kinase (299 aa).

Substrate contacts are provided by residues 72–73 (GG), arginine 94, and asparagine 196.

This sequence belongs to the acetylglutamate kinase family. ArgB subfamily.

The protein localises to the cytoplasm. It catalyses the reaction N-acetyl-L-glutamate + ATP = N-acetyl-L-glutamyl 5-phosphate + ADP. Its pathway is amino-acid biosynthesis; L-arginine biosynthesis; N(2)-acetyl-L-ornithine from L-glutamate: step 2/4. Catalyzes the ATP-dependent phosphorylation of N-acetyl-L-glutamate. The chain is Acetylglutamate kinase from Burkholderia cenocepacia (strain ATCC BAA-245 / DSM 16553 / LMG 16656 / NCTC 13227 / J2315 / CF5610) (Burkholderia cepacia (strain J2315)).